The sequence spans 874 residues: Alanine--tRNA ligase (874 aa).

Positions 564, 568, 665, and 669 each coordinate Zn(2+).

The protein belongs to the class-II aminoacyl-tRNA synthetase family. It depends on Zn(2+) as a cofactor.

Its subcellular location is the cytoplasm. The catalysed reaction is tRNA(Ala) + L-alanine + ATP = L-alanyl-tRNA(Ala) + AMP + diphosphate. Functionally, catalyzes the attachment of alanine to tRNA(Ala) in a two-step reaction: alanine is first activated by ATP to form Ala-AMP and then transferred to the acceptor end of tRNA(Ala). Also edits incorrectly charged Ser-tRNA(Ala) and Gly-tRNA(Ala) via its editing domain. The protein is Alanine--tRNA ligase of Paraburkholderia xenovorans (strain LB400).